The following is a 402-amino-acid chain: Phosphoglycerate kinase (402 aa).

Substrate contacts are provided by residues 21–23 (DFN), R36, 59–62 (HLGR), R119, and R154. ATP is bound by residues K207, G298, E329, and 356 to 359 (GGDA).

The protein belongs to the phosphoglycerate kinase family. Monomer.

The protein localises to the cytoplasm. The enzyme catalyses (2R)-3-phosphoglycerate + ATP = (2R)-3-phospho-glyceroyl phosphate + ADP. It functions in the pathway carbohydrate degradation; glycolysis; pyruvate from D-glyceraldehyde 3-phosphate: step 2/5. This Chlamydia pneumoniae (Chlamydophila pneumoniae) protein is Phosphoglycerate kinase (pgk).